Reading from the N-terminus, the 139-residue chain is Stress-related protein 1 (139 aa).

The span at 1-12 (MTSESSTPTGST) shows a compositional bias: polar residues. The segment at 1–86 (MTSESSTPTG…AERPGSATTP (86 aa)) is disordered. 2 stretches are compositionally biased toward low complexity: residues 14–53 (ALPA…SLVV) and 60–74 (SPVV…TRPR). A Phosphoserine modification is found at serine 60.

As to expression, embryo.

Its function is as follows. Involved in drought, heat, cold, and/or salt tolerance. The chain is Stress-related protein 1 (SRP1) from Zea mays (Maize).